Consider the following 248-residue polypeptide: Positive alginate biosynthesis regulatory protein (248 aa).

In terms of domain architecture, Response regulatory spans 2–117; sequence NVLIVDDEPL…DLAEALKKAS (116 aa). Asp54 is subject to 4-aspartylphosphate. The HTH LytTR-type domain occupies 142–247; that stretch reads ISARTRKGIE…VAGVRRLMHQ (106 aa).

The protein operates within glycan biosynthesis; alginate biosynthesis [regulation]. Functionally, positive regulator of the algD gene, which codes for a GDP-mannose dehydrogenase, a key step enzyme in the alginate biosynthesis pathway. The protein is Positive alginate biosynthesis regulatory protein (algR) of Pseudomonas aeruginosa (strain ATCC 15692 / DSM 22644 / CIP 104116 / JCM 14847 / LMG 12228 / 1C / PRS 101 / PAO1).